The following is a 279-amino-acid chain: Pleckstrin homology domain-containing family F member 1 (279 aa).

The PH domain maps to Val-35 to Arg-131. The segment at Asp-152–Ala-212 adopts an FYVE-type zinc-finger fold. Residues Cys-158, Cys-161, Cys-175, Cys-178, Cys-183, Cys-186, Cys-204, and Cys-207 each coordinate Zn(2+). The tract at residues Ala-220 to Thr-263 is disordered. Over residues Gly-244–Arg-253 the composition is skewed to acidic residues.

In terms of tissue distribution, widely expressed.

It is found in the nucleus. Its subcellular location is the cytoplasm. It localises to the perinuclear region. The protein localises to the lysosome. Functionally, may induce apoptosis through the lysosomal-mitochondrial pathway. Translocates to the lysosome initiating the permeabilization of lysosomal membrane (LMP) and resulting in the release of CTSD and CTSL to the cytoplasm. Triggers the caspase-independent apoptosis by altering mitochondrial membrane permeabilization (MMP) resulting in the release of PDCD8. The polypeptide is Pleckstrin homology domain-containing family F member 1 (Plekhf1) (Mus musculus (Mouse)).